The sequence spans 480 residues: UDP-N-acetylmuramoylalanine--D-glutamate ligase (480 aa).

127 to 133 (GTNGKTT) contributes to the ATP binding site.

It belongs to the MurCDEF family.

Its subcellular location is the cytoplasm. It carries out the reaction UDP-N-acetyl-alpha-D-muramoyl-L-alanine + D-glutamate + ATP = UDP-N-acetyl-alpha-D-muramoyl-L-alanyl-D-glutamate + ADP + phosphate + H(+). The protein operates within cell wall biogenesis; peptidoglycan biosynthesis. Its function is as follows. Cell wall formation. Catalyzes the addition of glutamate to the nucleotide precursor UDP-N-acetylmuramoyl-L-alanine (UMA). This chain is UDP-N-acetylmuramoylalanine--D-glutamate ligase, found in Tropheryma whipplei (strain Twist) (Whipple's bacillus).